Reading from the N-terminus, the 308-residue chain is Acetaldehyde dehydrogenase (308 aa).

14–17 (TGNI) provides a ligand contact to NAD(+). The active-site Acyl-thioester intermediate is Cys-129. NAD(+) is bound by residues 160 to 168 (SAGPGTRQN) and Asn-280.

It belongs to the acetaldehyde dehydrogenase family.

The catalysed reaction is acetaldehyde + NAD(+) + CoA = acetyl-CoA + NADH + H(+). The protein is Acetaldehyde dehydrogenase of Thermomicrobium roseum (strain ATCC 27502 / DSM 5159 / P-2).